The sequence spans 485 residues: Adenosylhomocysteinase (485 aa).

Positions 64, 139, and 205 each coordinate substrate. 206–208 contacts NAD(+); it reads TTT. Substrate is bound by residues Lys-235 and Asp-239. Residues Asn-240, 269 to 274, Glu-292, Asn-327, 348 to 350, and Asn-397 contribute to the NAD(+) site; these read GYGDVG and IGH.

Belongs to the adenosylhomocysteinase family. The cofactor is NAD(+).

It carries out the reaction S-adenosyl-L-homocysteine + H2O = L-homocysteine + adenosine. It participates in amino-acid biosynthesis; L-homocysteine biosynthesis; L-homocysteine from S-adenosyl-L-homocysteine: step 1/1. In terms of biological role, adenosylhomocysteine is a competitive inhibitor of S-adenosyl-L-methionine-dependent methyl transferase reactions; therefore adenosylhomocysteinase may play a key role in the control of methylations via regulation of the intracellular concentration of adenosylhomocysteine. The protein is Adenosylhomocysteinase (SAHH) of Nicotiana sylvestris (Wood tobacco).